The sequence spans 532 residues: MSYLLALDAGTGSIRAVIFDLNGRQLAVGQAEWKHLSVDNVPGSMEFDLTTNWQLACQCIRQALDAARLSAADIQSVACCSMREGIVLYDRNGEAIWACANVDARASREVAELKEIHDFRFESEVYEVSGQTLALSAMPRLLWLAHHRPDIYRKAATITMISDWLAAKLSGELAVDPSNAGTTGMLDLFSRDWRPALLDMAGLRADMLSPVKETGTLLGAVTEAAAQQSGLRAGTPVVMGGGDVQLGCLGLGVVRAGQTAVLGGTFWQQVVNLPQVRTDPQMNIRVNPHVIPGMAQAESISFFTGLTMRWFRDAFCAEEKLIAERLGVDAYSLLEEMASRVPAGSHGVMPIFSDAMHFKQWYHAAPSFINLSIDPEKCNKATLFRALEENAAIVSACNLAQISQFSGVTFESLVFAGGGSKGALWSQILSDVTGLPVRVPVVREATALGCAIAAGTGAGLYDDMASTGERLVSWHREFTPNPQHRELYQEMMSKWQTVYADQLGLVDSGLTTSMWQAPGLERRQRVASSPSP.

It belongs to the FGGY kinase family.

The protein localises to the cytoplasm. It catalyses the reaction (S)-4,5-dihydroxypentane-2,3-dione + ATP = (2S)-2-hydroxy-3,4-dioxopentyl phosphate + ADP + H(+). In terms of biological role, catalyzes the phosphorylation of autoinducer-2 (AI-2) to phospho-AI-2, which subsequently inactivates the transcriptional regulator LsrR and leads to the transcription of the lsr operon. Phosphorylates the ring-open form of (S)-4,5-dihydroxypentane-2,3-dione (DPD), which is the precursor to all AI-2 signaling molecules, at the C5 position. The protein is Autoinducer-2 kinase of Klebsiella pneumoniae subsp. pneumoniae (strain ATCC 700721 / MGH 78578).